The following is a 727-amino-acid chain: Endothelin-converting enzyme homolog (727 aa).

Residues 1–44 (MSFNFSRYSGAYTTTFSFLLLALLIVSAVLLSRPYAPALLHAEE) are Cytoplasmic-facing. The helical; Signal-anchor for type II membrane protein transmembrane segment at 45–65 (AYCVSMSCVTAAASVLSLMDA) threads the bilayer. The Peptidase M13 domain maps to 46–727 (YCVSMSCVTA…MNPVHKCEVW (682 aa)). 5 disulfides stabilise this stretch: cysteine 47–cysteine 52, cysteine 70–cysteine 712, cysteine 78–cysteine 672, cysteine 134–cysteine 392, and cysteine 601–cysteine 724. At 66–727 (TADPCSDFYQ…MNPVHKCEVW (662 aa)) the chain is on the extracellular side. Asparagine 138, asparagine 160, asparagine 164, asparagine 169, asparagine 222, asparagine 309, asparagine 337, asparagine 340, and asparagine 511 each carry an N-linked (GlcNAc...) asparagine glycan. Histidine 564 provides a ligand contact to Zn(2+). The active site involves glutamate 565. Histidine 568 lines the Zn(2+) pocket. N-linked (GlcNAc...) asparagine glycans are attached at residues asparagine 589 and asparagine 608. Glutamate 624 provides a ligand contact to Zn(2+). The active-site Proton donor is the aspartate 628. Asparagine 656 carries N-linked (GlcNAc...) asparagine glycosylation.

It belongs to the peptidase M13 family. Zn(2+) is required as a cofactor. In terms of tissue distribution, highly expressed in brain and midgut, and to a lesser extent in fat body, ovaries, testes and haemocytes.

It is found in the cell membrane. The sequence is that of Endothelin-converting enzyme homolog from Locusta migratoria (Migratory locust).